The chain runs to 242 residues: uncharacterized protein (242 aa).

The protein localises to the cytoplasm. Its subcellular location is the nucleus. This is an uncharacterized protein from Schizosaccharomyces pombe (strain 972 / ATCC 24843) (Fission yeast).